A 400-amino-acid polypeptide reads, in one-letter code: Cysteine desulfurase 1 (400 aa).

Residues 71–72 (GT), asparagine 150, glutamine 178, and 198–200 (SGH) contribute to the pyridoxal 5'-phosphate site. Lysine 201 bears the N6-(pyridoxal phosphate)lysine mark. Threonine 236 contacts pyridoxal 5'-phosphate. Residue cysteine 324 is the Cysteine persulfide intermediate of the active site. Residue cysteine 324 coordinates [2Fe-2S] cluster.

Belongs to the class-V pyridoxal-phosphate-dependent aminotransferase family. NifS/IscS subfamily. As to quaternary structure, homodimer. Pyridoxal 5'-phosphate is required as a cofactor.

The enzyme catalyses (sulfur carrier)-H + L-cysteine = (sulfur carrier)-SH + L-alanine. In terms of biological role, catalyzes the removal of elemental sulfur atoms from cysteine to produce alanine. Seems to participate in the biosynthesis of the nitrogenase metalloclusters by providing the inorganic sulfur required for the Fe-S core formation. In Trichormus variabilis (strain ATCC 29413 / PCC 7937) (Anabaena variabilis), this protein is Cysteine desulfurase 1.